The primary structure comprises 317 residues: Melanocyte-stimulating hormone receptor (317 aa).

Over 1 to 37 (MPVQGSQRRLLGSLNSTPTATPHLGLAANQTGARCLE) the chain is Extracellular. N29 carries N-linked (GlcNAc...) asparagine glycosylation. Residues 38-63 (VSIPDGLFLSLGLVSLVENVLVVTAI) form a helical membrane-spanning segment. Residues 64 to 72 (AKNRNLHSP) are Cytoplasmic-facing. A helical transmembrane segment spans residues 73–93 (MYCFICCLALSDLLVSGSNML). Residues 94–118 (ETAVILLLEAGALAARAAVVQQLDN) lie on the Extracellular side of the membrane. Residues 119-140 (VIDVITCSSMLSSLCFLGAIAV) traverse the membrane as a helical segment. Residues 141–163 (DRYISIFYALRYHSIVTLPRARR) lie on the Cytoplasmic side of the membrane. The chain crosses the membrane as a helical span at residues 164 to 183 (AVAAIWVASVLFSMLFIAYY). Over 184-191 (DHAAVLLC) the chain is Extracellular. The chain crosses the membrane as a helical span at residues 192 to 211 (LVVFFLAMLVLMAVLYVHML). The Cytoplasmic segment spans residues 212-240 (ARACQHAQGIARLHKRQCPAHQGFGLKGA). A helical membrane pass occupies residues 241-266 (ATLTILLGIFFLCWGPFFLHLTLIVL). The Extracellular portion of the chain corresponds to 267 to 279 (CPQHPTCSCIFKN). A helical membrane pass occupies residues 280-300 (FNLFLALIICNAIIDPLIYAF). The Cytoplasmic segment spans residues 301-317 (RSQELRRTLKEVLLCSW). The S-palmitoyl cysteine moiety is linked to residue C315.

The protein belongs to the G-protein coupled receptor 1 family. In terms of assembly, interacts with MGRN1, but does not undergo MGRN1-mediated ubiquitination; this interaction competes with GNAS-binding and thus inhibits agonist-induced cAMP production. Interacts with OPN3; the interaction results in a decrease in MC1R-mediated cAMP signaling and ultimately a decrease in melanin production in melanocytes.

The protein resides in the cell membrane. Receptor for MSH (alpha, beta and gamma) and ACTH. The activity of this receptor is mediated by G proteins which activate adenylate cyclase. Mediates melanogenesis, the production of eumelanin (black/brown) and phaeomelanin (red/yellow), via regulation of cAMP signaling in melanocytes. The polypeptide is Melanocyte-stimulating hormone receptor (MC1R) (Chlorocebus aethiops (Green monkey)).